The chain runs to 413 residues: Serine/threonine-protein kinase SSN3 (413 aa).

Residues 26 to 355 form the Protein kinase domain; it reads YHIVGFISSG…AQEALEHPYF (330 aa). Residues 32–40 and Lys56 each bind ATP; that span reads ISSGTYGRV. The active-site Proton acceptor is Asp158. The span at 376–385 shows a compositional bias: basic and acidic residues; sequence RRVTQDDNDI. The disordered stretch occupies residues 376-413; the sequence is RRVTQDDNDIRSGSLPGTKRSGLPDDSLMGRASKRLKE.

This sequence belongs to the protein kinase superfamily. CMGC Ser/Thr protein kinase family. CDC2/CDKX subfamily. In terms of assembly, component of the srb8-11 complex, a regulatory module of the Mediator complex. The cofactor is Mg(2+).

It is found in the nucleus. It carries out the reaction L-seryl-[protein] + ATP = O-phospho-L-seryl-[protein] + ADP + H(+). The enzyme catalyses L-threonyl-[protein] + ATP = O-phospho-L-threonyl-[protein] + ADP + H(+). It catalyses the reaction [DNA-directed RNA polymerase] + ATP = phospho-[DNA-directed RNA polymerase] + ADP + H(+). In terms of biological role, component of the srb8-11 complex. The srb8-11 complex is a regulatory module of the Mediator complex which is itself involved in regulation of basal and activated RNA polymerase II-dependent transcription. The srb8-11 complex may be involved in the transcriptional repression of a subset of genes regulated by Mediator. It may inhibit the association of the Mediator complex with RNA polymerase II to form the holoenzyme complex. The srb8-11 complex phosphorylates the C-terminal domain (CTD) of the largest subunit of RNA polymerase II. This is Serine/threonine-protein kinase SSN3 (ssn3) from Aspergillus oryzae (strain ATCC 42149 / RIB 40) (Yellow koji mold).